The chain runs to 421 residues: MKGENINNIHLVLKKMLWTSLIVFIFLIGRNILIPGVDAKQLARFLNNQYLLQIVNGTTGGDLSRMSLFALGLGPWMSATILWRVLTLIKRFDLKKIPIERTFLFKIAIAIIIGFIQSIAIISNIDINPKISIFAQTQFGAMATISLIMVSGAVFLVWLSNMNEILGIGGPTVLILASMIINWPTNVSLYILENVRSSLDINSVILMLVIMISIVFLVLLTVVVQRAQRQIPIRRILVNNNFYQQSYLPIQINPAGGMPLMYSMTLLVLPQYILQAVHYWLPNNVLVENGLDNIAITKPLGVTAYIIILFALSIGFAFININPDQIAEDLQQNSDYIDNVEPGDATREYITEIVFRLSFVGALYMSLIAGFPLYFGIIDKQYTQYALTAGSIIILVNLVINIIDQMKALLTKNNYSALFFE.

10 helical membrane-spanning segments follow: residues 17 to 37 (LWTSLIVFIFLIGRNILIPGV), 69 to 89 (FALGLGPWMSATILWRVLTLI), 102 to 122 (TFLFKIAIAIIIGFIQSIAII), 139 to 159 (FGAMATISLIMVSGAVFLVWL), 165 to 185 (ILGIGGPTVLILASMIINWPT), 204 to 224 (VILMLVIMISIVFLVLLTVVV), 254 to 274 (PAGGMPLMYSMTLLVLPQYIL), 299 to 319 (PLGVTAYIIILFALSIGFAFI), 358 to 378 (SFVGALYMSLIAGFPLYFGII), and 383 to 403 (TQYALTAGSIIILVNLVINII).

It belongs to the SecY/SEC61-alpha family. SecY2 subfamily. As to quaternary structure, component of the accessory SecA2/SecY2 protein translocase complex required to export cell wall proteins. May form heterotrimers with SecE and SecG subunits.

It is found in the cell membrane. Functionally, part of the accessory SecA2/SecY2 system specifically required for export of possible cell wall proteins. The central subunit of a protein translocation channel. The chain is Accessory Sec system protein translocase subunit SecY2 from Leuconostoc gelidum subsp. gasicomitatum (strain DSM 15947 / CCUG 46042 / CECT 5767 / JCM 12535 / LMG 18811 / NBRC 113245 / TB1-10) (Leuconostoc gasicomitatum).